A 346-amino-acid chain; its full sequence is 3-dehydroquinate synthase (346 aa).

NAD(+) is bound by residues D62–K67, G96–D100, T120–T121, K133, K142, and F160–T163. Zn(2+) contacts are provided by E175, H234, and H251.

The protein belongs to the sugar phosphate cyclases superfamily. Dehydroquinate synthase family. It depends on Co(2+) as a cofactor. Zn(2+) is required as a cofactor. The cofactor is NAD(+).

Its subcellular location is the cytoplasm. It carries out the reaction 7-phospho-2-dehydro-3-deoxy-D-arabino-heptonate = 3-dehydroquinate + phosphate. It functions in the pathway metabolic intermediate biosynthesis; chorismate biosynthesis; chorismate from D-erythrose 4-phosphate and phosphoenolpyruvate: step 2/7. Catalyzes the conversion of 3-deoxy-D-arabino-heptulosonate 7-phosphate (DAHP) to dehydroquinate (DHQ). The sequence is that of 3-dehydroquinate synthase from Campylobacter curvus (strain 525.92).